A 476-amino-acid chain; its full sequence is 23S rRNA (uracil(1939)-C(5))-methyltransferase RlmD (476 aa).

Residues 1-55 form the TRAM domain; it reads MVDEVLKIESLDLEARGIARRDGKVVFVEGALPGERVYAATVRRKPSYEIARVET. [4Fe-4S] cluster-binding residues include Cys-68, Cys-74, Cys-77, and Cys-156. Residues Gln-265, Phe-294, Asn-299, Glu-315, Asn-343, and Asp-364 each coordinate S-adenosyl-L-methionine. Cys-394 acts as the Nucleophile in catalysis.

This sequence belongs to the class I-like SAM-binding methyltransferase superfamily. RNA M5U methyltransferase family. RlmD subfamily.

The enzyme catalyses uridine(1939) in 23S rRNA + S-adenosyl-L-methionine = 5-methyluridine(1939) in 23S rRNA + S-adenosyl-L-homocysteine + H(+). Functionally, catalyzes the formation of 5-methyl-uridine at position 1939 (m5U1939) in 23S rRNA. In Bordetella avium (strain 197N), this protein is 23S rRNA (uracil(1939)-C(5))-methyltransferase RlmD.